Consider the following 202-residue polypeptide: Transcription antitermination protein NusB (202 aa).

The segment covering 1–11 (MTEERTADNKA) has biased composition (basic and acidic residues). Disordered stretches follow at residues 1-21 (MTEE…KRHG) and 169-202 (SAAK…SDEA).

This sequence belongs to the NusB family.

Functionally, involved in transcription antitermination. Required for transcription of ribosomal RNA (rRNA) genes. Binds specifically to the boxA antiterminator sequence of the ribosomal RNA (rrn) operons. This is Transcription antitermination protein NusB from Corynebacterium jeikeium (strain K411).